An 82-amino-acid polypeptide reads, in one-letter code: MAQAGSENKEPWNEETRAKFEGKSRSEYLDPCQEAAQRSIRCLHRNQGDRTMCSDYFEAYRECKKQWIERRREQKRKAGALF.

Residues 1 to 27 (MAQAGSENKEPWNEETRAKFEGKSRSE) are disordered. Positions 7-27 (ENKEPWNEETRAKFEGKSRSE) are enriched in basic and acidic residues. The region spanning 29-71 (LDPCQEAAQRSIRCLHRNQGDRTMCSDYFEAYRECKKQWIERR) is the CHCH domain. Short sequence motifs (cx9C motif) lie at residues 32–42 (CQEAAQRSIRC) and 53–63 (CSDYFEAYREC). 2 disulfides stabilise this stretch: C32-C63 and C42-C53.

The protein belongs to the COX23 family.

Its subcellular location is the mitochondrion intermembrane space. Its function is as follows. Required for the assembly of cytochrome c oxidase. This chain is Cytochrome c oxidase-assembly factor cox-23, mitochondrial (cox-23), found in Neurospora crassa (strain ATCC 24698 / 74-OR23-1A / CBS 708.71 / DSM 1257 / FGSC 987).